A 242-amino-acid chain; its full sequence is Probable transcriptional regulatory protein EF_0663 (242 aa).

Residues 1–14 (MSGHSKWSNIQGRK) are compositionally biased toward polar residues. The segment at 1–22 (MSGHSKWSNIQGRKNAQDAKRG) is disordered.

The protein belongs to the TACO1 family.

It localises to the cytoplasm. This is Probable transcriptional regulatory protein EF_0663 from Enterococcus faecalis (strain ATCC 700802 / V583).